A 314-amino-acid polypeptide reads, in one-letter code: DDRGK domain-containing protein 1 (314 aa).

The chain crosses the membrane as a helical span at residues Met-1–Ala-28. The tract at residues Met-1–Ser-114 is mediates interaction with CDK5RAP3. The Cytoplasmic portion of the chain corresponds to Ala-29–Ala-314. Disordered stretches follow at residues Ala-31–Gln-75 and Gln-100–His-186. Ser-72 and Ser-114 each carry phosphoserine. The tract at residues Gly-118–Leu-216 is mediates interaction with TRIP4. Positions Lys-124–His-186 are enriched in basic and acidic residues. Residues Ala-195–Glu-209 carry the UFM1-interacting motif (UFIM) motif. Positions Leu-216–Ala-314 are mediates interaction with UFL1. The PCI domain occupies Val-229–Pro-273. Lys-267 participates in a covalent cross-link: Glycyl lysine isopeptide (Lys-Gly) (interchain with G-Cter in UFM1).

This sequence belongs to the DDRGK1 family. Component of the UFM1 ribosome E3 ligase (UREL) complex, composed of UFL1, DDRGK1 and CDK5RAP3. Interacts with (unphosphorylated) ERN1/IRE1-alpha; interaction is dependent on UFM1 and takes place in response to endoplasmic reticulum stress, regulating ERN1/IRE1-alpha stability. Interacts with NFKBIA. Interacts with SOX9. Ubiquitinated. Ubiquitination probably triggers proteasomal degradation and is negatively regulated by UFL1, the enzyme involved in the ufmylation of DDRGK1. In terms of processing, ufmylated; conjugated to ubiquitin-like protein UFM1, probably at Lys-267 by UFL1. The relevance of ufmylation is however unclear: as DDRGK1 acts as a substrate adapters for ufmylation, it is uncertain whether ufmylation is a collateral effect of ufmylation process or is required to regulate its activity. As to expression, widely expressed (at protein level). In the brain, highest levels in medulla oblongata, followed by cerebral cortex, cerebellum and frontal lobe.

It localises to the endoplasmic reticulum membrane. Component of the UFM1 ribosome E3 ligase (UREL) complex, a multiprotein complex that catalyzes ufmylation of endoplasmic reticulum-docked proteins. The UREL complex plays a key role in ribosome recycling by mediating mono-ufmylation of the RPL26/uL24 subunit of the 60S ribosome following ribosome dissociation: ufmylation weakens the junction between post-termination 60S subunits and SEC61 translocons, promoting release and recycling of the large ribosomal subunit from the endoplasmic reticulum membrane. Ufmylation of RPL26/uL24 and subsequent 60S ribosome recycling either take place after normal termination of translation or after ribosome stalling during cotranslational translocation at the endoplasmic reticulum. Within the UREL complex, DDRGK1 tethers the complex to the endoplasmic reticulum membrane to restrict its activity to endoplasmic reticulum-docked ribosomes and acts as an ufmylation 'reader': following RPL26/uL24 ufmylation, DDRGK1 specifically binds to ufmylated RPL26/uL24 via its UFIM motif, resulting in stable association between the 60S ribosome and the UREL complex, followed by dissociation of the 60S ribosome subunit from the endoplasmic reticulum membrane. The UREL complex is also involved in reticulophagy in response to endoplasmic reticulum stress by promoting ufmylation of proteins such as CYB5R3 and RPN1, thereby promoting lysosomal degradation of ufmylated proteins. Ufmylation-dependent reticulophagy inhibits the unfolded protein response (UPR) by regulating ERN1/IRE1-alpha stability. Acts as a regulator of immunity by promoting differentiation of B-cells into plasma cells: acts by promoting expansion of the endoplasmic reticulum and regulating the unfolded protein response (UPR). May also be required for TRIP4 ufmylation. May play a role in NF-kappa-B-mediated transcription through regulation of the phosphorylation and the degradation of NFKBIA, the inhibitor of NF-kappa-B. Plays a role in cartilage development through SOX9, inhibiting the ubiquitin-mediated proteasomal degradation of this transcriptional regulator. Required for stabilization and ufmylation of ATG9A. This chain is DDRGK domain-containing protein 1, found in Homo sapiens (Human).